A 375-amino-acid chain; its full sequence is Protein GOLM2 (375 aa).

The Cytoplasmic portion of the chain corresponds to 1–12 (MVGFGANRRGGR). Residues 13-33 (LPSFLLAALLLVIAVLAFNCW) form a helical; Signal-anchor for type II membrane protein membrane-spanning segment. Positions 34-198 (NAASRQAVLR…REQKATQRIQ (165 aa)) form a coiled coil. At 34 to 375 (NAASRQAVLR…SKPRFGDGVL (342 aa)) the chain is on the lumenal side. 3 disordered regions span residues 81–102 (LEQK…DGQV), 193–327 (ATQR…DSQN), and 342–375 (RAVG…DGVL). Basic and acidic residues-rich tracts occupy residues 193–204 (ATQRIQSSKDAE) and 350–375 (KQND…DGVL).

This sequence belongs to the GOLM family.

It is found in the membrane. The protein is Protein GOLM2 (GOLM2) of Gallus gallus (Chicken).